A 146-amino-acid polypeptide reads, in one-letter code: Hemoglobin subunit beta (146 aa).

V1 is modified (N-acetylvaline). In terms of domain architecture, Globin spans 2–146 (HLTADEKAAV…VANALAHKYH (145 aa)). Residue T12 is modified to Phosphothreonine. A Phosphoserine modification is found at S44. An N6-acetyllysine modification is found at K59. H63 contacts heme b. At K82 the chain carries N6-acetyllysine. H92 is a heme b binding site. C93 carries the S-nitrosocysteine modification. At K144 the chain carries N6-acetyllysine.

The protein belongs to the globin family. As to quaternary structure, heterotetramer of two alpha chains and two beta chains. Red blood cells.

In terms of biological role, involved in oxygen transport from the lung to the various peripheral tissues. The polypeptide is Hemoglobin subunit beta (HBB) (Odobenus rosmarus divergens (Pacific walrus)).